Consider the following 638-residue polypeptide: MSRPLTPLLDCVLSPLDLRALPASDLARLADELRAEMIDVVSVTGGHLGAGLGVVELTIALHYIFNTPDDRIIWDVGHQAYPHKILTGRRDKIRTLRQEGGLSGFTKRSESIYDPFGAGHSSTSISAGLGMAMASALKAEERRNVIAVIGDGAMSAGMAYEAMNNAGALDARLIVILNDNDMSIAPPTGAMSAHLARLVSRPSYRHLRERIKLFSKKFPKFFSEQASRSEEFARGFLVGGTLFDELGFYYVGPIDGHNFEHLLPVLKNVRAYPNGPVLVHVVTHKGKGYAPAEESADKYHGVNRFDVVTGKQVKAQSTRLSYTKVFSKALIEEATHDHKIVAITAAMPTGTGLDSFAEKFSDRMFDVGIAEQHAVTFAAGIACEGYKPFVAIYSTFLQRAYDQIIHDVSIQKLPVRFAIDRAGFVGADGATHAGSFDIVFLATLPEFVVMAPSDEVELMHMVRTAAVYDQGPISFRYPRGEGIGMDLPQRGEVLEIGKGRVLREGSRVALVCFGTQLSEVLVAADELAAEGISTTVADARFAKPLDKDLMRRLAREHEVFITIEEGAIGGFGAHVLQFLAQEALLEHGLKVRTLRLPDEYLNHGSPEKILSRVGLDAKGIINAVFTSLGYETRKTLQI.

Thiamine diphosphate-binding positions include H78 and 119–121 (GHS). Position 151 (D151) interacts with Mg(2+). Residues 152–153 (GA), N180, Y289, and E371 each bind thiamine diphosphate. N180 is a binding site for Mg(2+).

Belongs to the transketolase family. DXPS subfamily. As to quaternary structure, homodimer. Mg(2+) serves as cofactor. It depends on thiamine diphosphate as a cofactor.

The enzyme catalyses D-glyceraldehyde 3-phosphate + pyruvate + H(+) = 1-deoxy-D-xylulose 5-phosphate + CO2. The protein operates within metabolic intermediate biosynthesis; 1-deoxy-D-xylulose 5-phosphate biosynthesis; 1-deoxy-D-xylulose 5-phosphate from D-glyceraldehyde 3-phosphate and pyruvate: step 1/1. Its function is as follows. Catalyzes the acyloin condensation reaction between C atoms 2 and 3 of pyruvate and glyceraldehyde 3-phosphate to yield 1-deoxy-D-xylulose-5-phosphate (DXP). The chain is 1-deoxy-D-xylulose-5-phosphate synthase from Bartonella bacilliformis (strain ATCC 35685 / KC583 / Herrer 020/F12,63).